We begin with the raw amino-acid sequence, 231 residues long: S-norcoclaurine synthase 2 (231 aa).

Dopamine is bound at residue 107-109 (YKE). The Proton donor role is filled by Lys121. Residue Asp140 participates in (4-hydroxyphenyl)acetaldehyde binding. A helical membrane pass occupies residues 210–230 (LLLCLIICLVIAGGMFVAGVP).

This sequence belongs to the BetVI family. As to expression, expressed in roots, stems and leaves. Detected in flower buds and germinating seeds. Low expression in carpels. Restricted to sieve elements of the phloem adjacent or proximal to laticifers.

The protein resides in the endoplasmic reticulum membrane. It is found in the vacuole membrane. The enzyme catalyses (4-hydroxyphenyl)acetaldehyde + dopamine = (S)-norcoclaurine + H2O. It participates in alkaloid biosynthesis; (S)-reticuline biosynthesis. With respect to regulation, activity doubles within 5 hours of elicitor treatment and continues to increase for at least 80 hours. Functionally, involved in the biosynthesis of (S)-coclaurine, the common precursor of all benzylisoquinoline alkaloids such as morphine, sanguinarine, codeine or papaverine. Condenses dopamine and 4-hydroxyphenylacetaldehyde. This chain is S-norcoclaurine synthase 2, found in Papaver somniferum (Opium poppy).